Here is a 350-residue protein sequence, read N- to C-terminus: Probable arabinogalactan endo-beta-1,4-galactanase A (350 aa).

The N-terminal stretch at 1–16 is a signal peptide; that stretch reads MIYSLLLSALPLLSSA. The N-linked (GlcNAc...) asparagine glycan is linked to Asn-128. Residue Glu-152 is the Proton donor of the active site. The active-site Nucleophile is Glu-262.

This sequence belongs to the glycosyl hydrolase 53 family.

It localises to the secreted. It catalyses the reaction The enzyme specifically hydrolyzes (1-&gt;4)-beta-D-galactosidic linkages in type I arabinogalactans.. Its function is as follows. Endogalactanase involved in the degradation of plant cell wall polysaccharides, and more particularly of hairy regions of pectin. The polypeptide is Probable arabinogalactan endo-beta-1,4-galactanase A (galA) (Aspergillus niger (strain ATCC MYA-4892 / CBS 513.88 / FGSC A1513)).